The primary structure comprises 284 residues: NADH-cytochrome b5 reductase 1 (284 aa).

The helical transmembrane segment at 7–27 (KLVVVIVIVVVPLLFKFIIGP) threads the bilayer. In terms of domain architecture, FAD-binding FR-type spans 38 to 142 (NDFQSFPLVE…KGPRGNYHYE (105 aa)). FAD contacts are provided by residues 122-137 (GELK…GPRG) and 148-180 (HLGM…KVSL).

It belongs to the flavoprotein pyridine nucleotide cytochrome reductase family. As to quaternary structure, monomer. Component of the 2-(3-amino-3-carboxypropyl)histidine synthase complex composed of DPH1, DPH2, KTI11/DPH3 and a NADH-dependent reductase, predominantly CBR1. Interacts with KTI11/DPH3. Interacts with STE20. The cofactor is FAD.

It is found in the mitochondrion outer membrane. The catalysed reaction is 2 Fe(III)-[cytochrome b5] + NADH = 2 Fe(II)-[cytochrome b5] + NAD(+) + H(+). It catalyses the reaction 2 Fe(3+)-[Dph3] + NADH = 2 Fe(2+)-[Dph3] + NAD(+) + H(+). It functions in the pathway protein modification; peptidyl-diphthamide biosynthesis. Its activity is regulated as follows. Competitively inhibited by NAD(+). Inhibited by mercurials such as p-chloromercuribenzoate (PCMB) and HgCl(2). Enzymatic activity increases under anaerobic conditions. In terms of biological role, NADH-dependent reductase for KTI11/DPH3 and cytochrome b5. Required for the first step of diphthamide biosynthesis, a post-translational modification of histidine which occurs in elongation factor 2. DPH1 and DPH2 transfer a 3-amino-3-carboxypropyl (ACP) group from S-adenosyl-L-methionine (SAM) to a histidine residue, the reaction is assisted by a reduction system comprising KTI11/DPH3 and a NADH-dependent reductase, predominantly CBR1. By reducing KTI11/DPH3, also involved in the formation of the tRNA wobble base modification mcm5s 2U (5-methoxycarbonylmethyl-2-thiouridine), mediated by the elongator complex. The cytochrome b5/NADH cytochrome b5 reductase electron transfer system supports the catalytic activity of several sterol biosynthetic enzymes. Plays a role in bud morphology. The polypeptide is NADH-cytochrome b5 reductase 1 (CBR1) (Saccharomyces cerevisiae (strain ATCC 204508 / S288c) (Baker's yeast)).